We begin with the raw amino-acid sequence, 310 residues long: Cytosolic Fe-S cluster assembly factor Nubp1 homolog (310 aa).

4 residues coordinate [4Fe-4S] cluster: Cys-9, Cys-23, Cys-26, and Cys-32. 63–70 contributes to the ATP binding site; sequence GKGGVGKS. Residues Cys-240 and Cys-243 each contribute to the [4Fe-4S] cluster site.

It belongs to the Mrp/NBP35 ATP-binding proteins family. NUBP1/NBP35 subfamily. Heterotetramer of 2 Nubp1 and 2 Nubp2 chains. [4Fe-4S] cluster serves as cofactor.

It is found in the cytoplasm. Component of the cytosolic iron-sulfur (Fe/S) protein assembly (CIA) machinery. Required for maturation of extramitochondrial Fe-S proteins. The Nubp1-Nubp2 heterotetramer forms a Fe-S scaffold complex, mediating the de novo assembly of an Fe-S cluster and its transfer to target apoproteins. The sequence is that of Cytosolic Fe-S cluster assembly factor Nubp1 homolog from Drosophila virilis (Fruit fly).